The sequence spans 155 residues: NADPH-dependent 7-cyano-7-deazaguanine reductase (155 aa).

The active-site Thioimide intermediate is Cys-53. The active-site Proton donor is the Asp-60. Substrate contacts are provided by residues 75–77 (VES) and 94–95 (HE).

The protein belongs to the GTP cyclohydrolase I family. QueF type 1 subfamily.

The protein resides in the cytoplasm. The enzyme catalyses 7-aminomethyl-7-carbaguanine + 2 NADP(+) = 7-cyano-7-deazaguanine + 2 NADPH + 3 H(+). It participates in tRNA modification; tRNA-queuosine biosynthesis. Functionally, catalyzes the NADPH-dependent reduction of 7-cyano-7-deazaguanine (preQ0) to 7-aminomethyl-7-deazaguanine (preQ1). This is NADPH-dependent 7-cyano-7-deazaguanine reductase from Brucella anthropi (strain ATCC 49188 / DSM 6882 / CCUG 24695 / JCM 21032 / LMG 3331 / NBRC 15819 / NCTC 12168 / Alc 37) (Ochrobactrum anthropi).